The sequence spans 316 residues: Acetyl-coenzyme A carboxylase carboxyl transferase subunit alpha (316 aa).

In terms of domain architecture, CoA carboxyltransferase C-terminal spans 36 to 290; it reads KLEQKLDSLK…KQFLVEQLHI (255 aa).

This sequence belongs to the AccA family. In terms of assembly, acetyl-CoA carboxylase is a heterohexamer composed of biotin carboxyl carrier protein (AccB), biotin carboxylase (AccC) and two subunits each of ACCase subunit alpha (AccA) and ACCase subunit beta (AccD).

The protein localises to the cytoplasm. The catalysed reaction is N(6)-carboxybiotinyl-L-lysyl-[protein] + acetyl-CoA = N(6)-biotinyl-L-lysyl-[protein] + malonyl-CoA. It functions in the pathway lipid metabolism; malonyl-CoA biosynthesis; malonyl-CoA from acetyl-CoA: step 1/1. In terms of biological role, component of the acetyl coenzyme A carboxylase (ACC) complex. First, biotin carboxylase catalyzes the carboxylation of biotin on its carrier protein (BCCP) and then the CO(2) group is transferred by the carboxyltransferase to acetyl-CoA to form malonyl-CoA. This chain is Acetyl-coenzyme A carboxylase carboxyl transferase subunit alpha, found in Protochlamydia amoebophila (strain UWE25).